Reading from the N-terminus, the 178-residue chain is Platelet inhibitor triplatin-2 (178 aa).

A signal peptide spans 1-18 (MKMIISLTFLGILMLAFA). Disulfide bonds link Cys-25–Cys-134, Cys-60–Cys-178, and Cys-90–Cys-106.

It belongs to the calycin superfamily. Triabin family. In terms of tissue distribution, expressed in salivary glands.

The protein localises to the secreted. Its function is as follows. Inhibits platelet aggregation and vasoconstriction through binding to distinct eicosanoids involved in inflammation (acts as a scavenger), and has a role in inhibiting host innate immunity by impairing platelet-assisted formation of neutrophil extracellular traps (NETs). Inhibits platelet aggregation by collagen, and low doses of thromboxane A2 mimetic (TXA2 mimetic), and arachidonic acid (AA) without affecting aggregation induced by ADP, convulxin (GP6 agonist), and PMA. Binds to TXA2, TXB2, prostaglandine H2 mimetic (PGH2 mimetic), PGJ2, and PGF2alpha. Binding is not observed to leukotrienes, AA, and biogenic amines (PGE1, 5(S)-HETE, 12(S)-HETE, 20-HETE, norepinephrine, epinephrine, serotonin, LTC4 and ADP). Induces relaxation of aorta rat previously contracted with TXA2 mimetic. Moreover, it also impairs platelet-assisted formation of neutrophil extracellular traps (NETs). NETs are web-like structures of DNA and proteins that play an important role in killing of pathogens. In addition, NETs are implicated in thrombus formation. In vivo, this protein exhibits antithrombotic activity in two distinct mice models that are highly dependent on platelets. It is noteworthy that it inhibits thrombosis without promoting excessive bleeding. The chain is Platelet inhibitor triplatin-2 from Triatoma infestans (Assassin bug).